Consider the following 292-residue polypeptide: 4-hydroxy-tetrahydrodipicolinate synthase (292 aa).

Residue T48 coordinates pyruvate. Y136 (proton donor/acceptor) is an active-site residue. The active-site Schiff-base intermediate with substrate is K164. A pyruvate-binding site is contributed by I204.

It belongs to the DapA family. In terms of assembly, homotetramer; dimer of dimers.

It localises to the cytoplasm. The enzyme catalyses L-aspartate 4-semialdehyde + pyruvate = (2S,4S)-4-hydroxy-2,3,4,5-tetrahydrodipicolinate + H2O + H(+). It functions in the pathway amino-acid biosynthesis; L-lysine biosynthesis via DAP pathway; (S)-tetrahydrodipicolinate from L-aspartate: step 3/4. Catalyzes the condensation of (S)-aspartate-beta-semialdehyde [(S)-ASA] and pyruvate to 4-hydroxy-tetrahydrodipicolinate (HTPA). The protein is 4-hydroxy-tetrahydrodipicolinate synthase of Acetivibrio thermocellus (strain ATCC 27405 / DSM 1237 / JCM 9322 / NBRC 103400 / NCIMB 10682 / NRRL B-4536 / VPI 7372) (Clostridium thermocellum).